Reading from the N-terminus, the 86-residue chain is Cytochrome c oxidase subunit 6B1 (86 aa).

An N-acetylalanine modification is found at Ala2. Residues 27-73 (TRNCWQNYLDFHRCEKAMTAKGGDVSVCEWYRRVYKSLCPISWVSTW) enclose the CHCH domain. The Cx9C motif signature appears at 30–40 (CWQNYLDFHRC). Disulfide bonds link Cys30–Cys65 and Cys40–Cys54. The Cx10C motif motif lies at 54-65 (CEWYRRVYKSLC). Lys62 carries the post-translational modification N6-acetyllysine.

This sequence belongs to the cytochrome c oxidase subunit 6B family. Component of the cytochrome c oxidase (complex IV, CIV), a multisubunit enzyme composed of 14 subunits. The complex is composed of a catalytic core of 3 subunits MT-CO1, MT-CO2 and MT-CO3, encoded in the mitochondrial DNA, and 11 supernumerary subunits COX4I, COX5A, COX5B, COX6A, COX6B, COX6C, COX7A, COX7B, COX7C, COX8 and NDUFA4, which are encoded in the nuclear genome. The complex exists as a monomer or a dimer and forms supercomplexes (SCs) in the inner mitochondrial membrane with NADH-ubiquinone oxidoreductase (complex I, CI) and ubiquinol-cytochrome c oxidoreductase (cytochrome b-c1 complex, complex III, CIII), resulting in different assemblies (supercomplex SCI(1)III(2)IV(1) and megacomplex MCI(2)III(2)IV(2)).

It is found in the mitochondrion inner membrane. It participates in energy metabolism; oxidative phosphorylation. Functionally, component of the cytochrome c oxidase, the last enzyme in the mitochondrial electron transport chain which drives oxidative phosphorylation. The respiratory chain contains 3 multisubunit complexes succinate dehydrogenase (complex II, CII), ubiquinol-cytochrome c oxidoreductase (cytochrome b-c1 complex, complex III, CIII) and cytochrome c oxidase (complex IV, CIV), that cooperate to transfer electrons derived from NADH and succinate to molecular oxygen, creating an electrochemical gradient over the inner membrane that drives transmembrane transport and the ATP synthase. Cytochrome c oxidase is the component of the respiratory chain that catalyzes the reduction of oxygen to water. Electrons originating from reduced cytochrome c in the intermembrane space (IMS) are transferred via the dinuclear copper A center (CU(A)) of subunit 2 and heme A of subunit 1 to the active site in subunit 1, a binuclear center (BNC) formed by heme A3 and copper B (CU(B)). The BNC reduces molecular oxygen to 2 water molecules using 4 electrons from cytochrome c in the IMS and 4 protons from the mitochondrial matrix. The polypeptide is Cytochrome c oxidase subunit 6B1 (COX6B1) (Carlito syrichta (Philippine tarsier)).